The primary structure comprises 132 residues: Small ribosomal subunit protein uS8c (132 aa).

The protein belongs to the universal ribosomal protein uS8 family. In terms of assembly, part of the 30S ribosomal subunit.

The protein resides in the plastid. Its subcellular location is the chloroplast. Its function is as follows. One of the primary rRNA binding proteins, it binds directly to 16S rRNA central domain where it helps coordinate assembly of the platform of the 30S subunit. The protein is Small ribosomal subunit protein uS8c (rps8) of Ceratophyllum demersum (Rigid hornwort).